Consider the following 278-residue polypeptide: MPTKTSQHAFAGSERWVVPRYSSKPGTLIRLGSVLTDPEDLESSLNLDSIPPIPPHLLRDATPEVRMSVQTELSKSDSTLAKAAPALEGILTLGGGVEASRSQGVSSSLNISGTVKATVFRADKSYMDVLLKDKNVISYAKRGLGKPMFVVVGVATAGRVEMKETRHVTRKAGVSGKVGVEVIGEGEVGLERERSDKSCNEVRGEGGLDFAYRVREFGYSRVRGTVKDKGDWTGKVLFAGGKGPVVEKGGEVVPVFKEFKEGEVKLRATGSFDVAAKA.

Belongs to the gasdermin family. Homooligomer; forms a homooligomeric ring-shaped pore complex when inserted in the membrane. Post-translationally, the precursor form is cleaved by het-Q2, generating the pore-forming protein (Gasdermin-like protein het-Q1, N-terminal).

The protein resides in the cell membrane. Gasdermin-like protein involved in heterokaryon incompatibility, a process that ensures that during spontaneous vegetative cell fusion, only compatible cells from the same colony survive (non-self-recognition). In P.anserina, the het-q locus exists as 2 incompatible alleles, het-Q1 (this entry) and het-Q2 (AC P0DW09). This form constitutes the precursor of the pore-forming protein: during the allorecognition process, it is cleaved by het-Q2, releasing the N-terminal moiety (Gasdermin-like protein het-Q1, N-terminal) that binds to membranes and forms pores, triggering cell death. In terms of biological role, pore-forming protein that causes membrane permeabilization and cell death. Released upon cleavage and maturation by het-Q2 and binds to membrane inner leaflet lipids. Homooligomerizes within the membrane and forms pores of 10-15 nanometers (nm) of inner diameter, triggering cell death. This Podospora anserina (strain S / ATCC MYA-4624 / DSM 980 / FGSC 10383) (Pleurage anserina) protein is Gasdermin-like protein het-Q1.